Consider the following 352-residue polypeptide: Proton-activated chloride channel (352 aa).

Residues 1–55 (MEAIRKELSRSYQELNEEAEPVAIDPEEAEDEEKEQEEAASAVAPDRDSDRSSPP) are disordered. At 1 to 65 (MEAIRKELSR…VRFSRTCLKN (65 aa)) the chain is on the cytoplasmic side. The segment covering 15–38 (LNEEAEPVAIDPEEAEDEEKEQEE) has biased composition (acidic residues). The chain crosses the membrane as a helical span at residues 66–86 (FFSVLLILVYLLLMGVAVFLV). Residues 87-299 (YQTITDFRDK…KDPYIQEIQD (213 aa)) are Extracellular-facing. A helical transmembrane segment spans residues 300-320 (IITANPWSMIALLCSVFLVLF). The Cytoplasmic portion of the chain corresponds to 321–352 (KAADFAKLSVKWMIKVRRRHLKKRARELNHIS).

Belongs to the proton-activated chloride channel family.

It localises to the cell membrane. The catalysed reaction is chloride(in) = chloride(out). In terms of biological role, chloride channel gated by pH that facilitates the entry of chloride ions into cells upon exposure to extracellular acidic pH. The chain is Proton-activated chloride channel from Xenopus tropicalis (Western clawed frog).